Consider the following 100-residue polypeptide: Aspartyl/glutamyl-tRNA(Asn/Gln) amidotransferase subunit C (100 aa).

It belongs to the GatC family. Heterotrimer of A, B and C subunits.

The catalysed reaction is L-glutamyl-tRNA(Gln) + L-glutamine + ATP + H2O = L-glutaminyl-tRNA(Gln) + L-glutamate + ADP + phosphate + H(+). It catalyses the reaction L-aspartyl-tRNA(Asn) + L-glutamine + ATP + H2O = L-asparaginyl-tRNA(Asn) + L-glutamate + ADP + phosphate + 2 H(+). Functionally, allows the formation of correctly charged Asn-tRNA(Asn) or Gln-tRNA(Gln) through the transamidation of misacylated Asp-tRNA(Asn) or Glu-tRNA(Gln) in organisms which lack either or both of asparaginyl-tRNA or glutaminyl-tRNA synthetases. The reaction takes place in the presence of glutamine and ATP through an activated phospho-Asp-tRNA(Asn) or phospho-Glu-tRNA(Gln). The protein is Aspartyl/glutamyl-tRNA(Asn/Gln) amidotransferase subunit C of Streptococcus pneumoniae (strain P1031).